Consider the following 223-residue polypeptide: Type III pantothenate kinase (223 aa).

17–24 provides a ligand contact to ATP; that stretch reads DIGNTRIH. Residues Y81 and 85-88 each bind substrate; that span reads GIDR. The Proton acceptor role is filled by D87. D102 is a binding site for K(+). S105 contacts ATP. T157 provides a ligand contact to substrate.

Belongs to the type III pantothenate kinase family. Homodimer. The cofactor is NH4(+). Requires K(+) as cofactor.

It localises to the cytoplasm. The enzyme catalyses (R)-pantothenate + ATP = (R)-4'-phosphopantothenate + ADP + H(+). The protein operates within cofactor biosynthesis; coenzyme A biosynthesis; CoA from (R)-pantothenate: step 1/5. Its activity is regulated as follows. Not regulated by feedback inhibition by CoA and its thioesters as described for many other pantothenate kinases. Not inhibited by N-pentylpantothenamide (N5-Pan), and this compound cannot act as a substrate either. Functionally, catalyzes the phosphorylation of pantothenate (Pan), the first step in CoA biosynthesis. Can also utilize CTP or GTP instead of ATP as a phosphoryl donor, albeit to a lesser extent. The chain is Type III pantothenate kinase (coaX) from Helicobacter pylori (strain ATCC 700392 / 26695) (Campylobacter pylori).